A 267-amino-acid polypeptide reads, in one-letter code: tRNA pseudouridine synthase A (267 aa).

Catalysis depends on Asp51, which acts as the Nucleophile. Tyr109 provides a ligand contact to substrate.

It belongs to the tRNA pseudouridine synthase TruA family.

The enzyme catalyses uridine(38/39/40) in tRNA = pseudouridine(38/39/40) in tRNA. In terms of biological role, formation of pseudouridine at positions 38, 39 and 40 in the anticodon stem and loop of transfer RNAs. In Methanothrix thermoacetophila (strain DSM 6194 / JCM 14653 / NBRC 101360 / PT) (Methanosaeta thermophila), this protein is tRNA pseudouridine synthase A.